The following is a 209-amino-acid chain: Pyridoxine/pyridoxamine 5'-phosphate oxidase (209 aa).

Residues 7–10 (RADY) and Lys-64 each bind substrate. Residues 59–64 (RIVLLK), 74–75 (FT), and Lys-81 each bind FMN. Residues Tyr-121, Arg-125, and Ser-129 each contribute to the substrate site. Residues 138-139 (QS), Trp-182, and Arg-192 contribute to the FMN site.

It belongs to the pyridoxamine 5'-phosphate oxidase family. As to quaternary structure, homodimer. It depends on FMN as a cofactor.

The enzyme catalyses pyridoxamine 5'-phosphate + O2 + H2O = pyridoxal 5'-phosphate + H2O2 + NH4(+). It carries out the reaction pyridoxine 5'-phosphate + O2 = pyridoxal 5'-phosphate + H2O2. It functions in the pathway cofactor metabolism; pyridoxal 5'-phosphate salvage; pyridoxal 5'-phosphate from pyridoxamine 5'-phosphate: step 1/1. It participates in cofactor metabolism; pyridoxal 5'-phosphate salvage; pyridoxal 5'-phosphate from pyridoxine 5'-phosphate: step 1/1. Its function is as follows. Catalyzes the oxidation of either pyridoxine 5'-phosphate (PNP) or pyridoxamine 5'-phosphate (PMP) into pyridoxal 5'-phosphate (PLP). In Haemophilus ducreyi (strain 35000HP / ATCC 700724), this protein is Pyridoxine/pyridoxamine 5'-phosphate oxidase.